Consider the following 142-residue polypeptide: ATP synthase subunit b' (142 aa).

Residues 7–27 traverse the membrane as a helical segment; that stretch reads TLPLMMFQFFLLVAVLNAVFF.

It belongs to the ATPase B chain family. As to quaternary structure, F-type ATPases have 2 components, F(1) - the catalytic core - and F(0) - the membrane proton channel. F(1) has five subunits: alpha(3), beta(3), gamma(1), delta(1), epsilon(1). F(0) has four main subunits: a(1), b(1), b'(1) and c(10-14). The alpha and beta chains form an alternating ring which encloses part of the gamma chain. F(1) is attached to F(0) by a central stalk formed by the gamma and epsilon chains, while a peripheral stalk is formed by the delta, b and b' chains.

It localises to the cellular thylakoid membrane. In terms of biological role, f(1)F(0) ATP synthase produces ATP from ADP in the presence of a proton or sodium gradient. F-type ATPases consist of two structural domains, F(1) containing the extramembraneous catalytic core and F(0) containing the membrane proton channel, linked together by a central stalk and a peripheral stalk. During catalysis, ATP synthesis in the catalytic domain of F(1) is coupled via a rotary mechanism of the central stalk subunits to proton translocation. Its function is as follows. Component of the F(0) channel, it forms part of the peripheral stalk, linking F(1) to F(0). The b'-subunit is a diverged and duplicated form of b found in plants and photosynthetic bacteria. This chain is ATP synthase subunit b', found in Acaryochloris marina (strain MBIC 11017).